The following is a 982-amino-acid chain: Pentatricopeptide repeat-containing protein At5g62370 (982 aa).

PPR repeat units lie at residues 94 to 129, 130 to 164, 165 to 199, 200 to 234, 236 to 270, 271 to 305, 306 to 340, 341 to 376, 377 to 411, 412 to 446, 476 to 510, 511 to 545, 546 to 580, 581 to 615, 616 to 650, 651 to 685, 686 to 720, 721 to 755, 759 to 789, 793 to 827, 828 to 858, 860 to 894, 895 to 929, and 930 to 964; these read DSSC…GIVP, DSSV…GYAP, SRNS…GSGL, WLWC…TRMP, PVNL…GYYV, DKVM…SFEL, DPCI…GVQS, NVFT…DISR, NVHC…GIVP, DHIT…GCGI, AAVG…GCTP, LPFS…DFVP, DVDT…GLRP, TVAI…GIQP, DEIA…FLRP, SSFT…GLSP, NVVL…DIKH, DHIA…KLLQ, RTKP…VKKS, NLYL…GIVP, NLVT…TNCE, DQVM…GINP, NKDS…DIWP, and RSIN…GRSL.

Belongs to the PPR family. P subfamily.

In Arabidopsis thaliana (Mouse-ear cress), this protein is Pentatricopeptide repeat-containing protein At5g62370.